The chain runs to 151 residues: 3-dehydroquinate dehydratase (151 aa).

Tyr-24 serves as the catalytic Proton acceptor. 3 residues coordinate substrate: Asn-76, His-82, and Asp-89. The active-site Proton donor is the His-102. Residues 103–104 and Arg-113 contribute to the substrate site; that span reads VS.

The protein belongs to the type-II 3-dehydroquinase family. Homododecamer.

It carries out the reaction 3-dehydroquinate = 3-dehydroshikimate + H2O. It functions in the pathway metabolic intermediate biosynthesis; chorismate biosynthesis; chorismate from D-erythrose 4-phosphate and phosphoenolpyruvate: step 3/7. Its function is as follows. Catalyzes a trans-dehydration via an enolate intermediate. In Rhodopseudomonas palustris (strain TIE-1), this protein is 3-dehydroquinate dehydratase.